The primary structure comprises 309 residues: Probable lipid kinase YegS-like (309 aa).

The region spanning 1-134 (MAPSHWRLIL…IDLLRIDADH (134 aa)) is the DAGKc domain. ATP contacts are provided by residues Thr39, 65-71 (GDGTLSE), and Thr96. Mg(2+)-binding residues include Leu219, Asp222, and Leu224. The Proton acceptor role is filled by Glu280.

Belongs to the diacylglycerol/lipid kinase family. YegS lipid kinase subfamily. It depends on Mg(2+) as a cofactor. Ca(2+) serves as cofactor.

Its subcellular location is the cytoplasm. Its function is as follows. Probably phosphorylates lipids; the in vivo substrate is unknown. The polypeptide is Probable lipid kinase YegS-like (Xanthomonas campestris pv. campestris (strain 8004)).